The following is a 51-amino-acid chain: Large ribosomal subunit protein bL33 (51 aa).

It belongs to the bacterial ribosomal protein bL33 family.

The protein is Large ribosomal subunit protein bL33 of Marinobacter nauticus (strain ATCC 700491 / DSM 11845 / VT8) (Marinobacter aquaeolei).